The primary structure comprises 64 residues: Conotoxin Cal6.24 (64 aa).

The signal sequence occupies residues 1 to 22; the sequence is MKLTCVMIVAVLVLTVCKVVTS. Intrachain disulfides connect Cys-32–Cys-50, Cys-40–Cys-54, and Cys-49–Cys-60.

Expressed by the venom duct.

The protein localises to the secreted. In terms of biological role, probable neurotoxin. The chain is Conotoxin Cal6.24 from Californiconus californicus (California cone).